We begin with the raw amino-acid sequence, 637 residues long: MAGGAGWSGAPAALLRSVRRLREVFEVCGRDPDGFLRVERVAALGLRFGQGEEVEKLVKYLDPNDLGRINFKDFCRGVFAMKGCEELLKDVLSVESAGTLPCAPEIPDCVEQGSEVTGPTFADGELIPREPGFFPEDEEEAMTLAPPEGPQELYTDSPMESTQSLEGSVGSPAEKDGGLGGLFLPEDKSLVHTPSMTTSDLSTHSTTSLISNEEQFEDYGEGDDVDCAPSSPCPDDETRTNVYSDLGSSVSSSAGQTPRKMRHVYNSELLDVYCSQCCKKINLLNDLEARLKNLKANSPNRKISSTAFGRQLMHSSNFSSSNGSTEDLFRDSIDSCDNDITEKVSFLEKKVTELENDSLTNGDLKSKLKQENTQLVHRVHELEEMVKDQETTAEQALEEEARRHREAYGKLEREKATEVELLNARVQQLEEENTELRTTVTRLKSQTEKLDEERQRMSDRLEDTSLRLKDEMDLYKRMMDKLRQNRLEFQKEREATQELIEDLRKELEHLQMYKLDCERPGRGRSASSGLGEFNARAREVELEHEVKRLKQENYKLRDQNDDLNGQILSLSLYEAKNLFAAQTKAQSLAAEIDTASRDELMEALKEQEEINFRLRQYMDKIILAILDHNPSILEIKH.

One can recognise an EF-hand domain in the interval 49–84 (GQGEEVEKLVKYLDPNDLGRINFKDFCRGVFAMKGC). Ca(2+) is bound by residues Asp-62, Asn-64, Arg-68, and Asp-73. A necessary for interaction with RAB11A, subcellular location, homo- or heterooligomerization region spans residues 82 to 637 (KGCEELLKDV…HNPSILEIKH (556 aa)). 2 disordered regions span residues 138-175 (EEEA…PAEK) and 219-256 (YGEG…SAGQ). Residues 280-617 (KINLLNDLEA…EEINFRLRQY (338 aa)) adopt a coiled-coil conformation. In terms of domain architecture, FIP-RBD spans 574–636 (EAKNLFAAQT…DHNPSILEIK (63 aa)).

Homodimer. Forms a complex with Rab11 (RAB11A or RAB11B) and ARF6. Interacts with RAB11A; the interaction is direct. Forms a heterooligomeric complex with RAB11FIP2, RAB11FIP3 and RAB11FIP5. Interacts with ECPAS. In terms of assembly, (Microbial infection) Interacts with human cytomegalovirus/HHV-5 protein gM/UL100. In terms of tissue distribution, present at high level in testis (at protein level). Weakly expressed in other tissues.

It is found in the endosome. The protein localises to the cytoplasm. The protein resides in the cytoskeleton. Its subcellular location is the spindle. It localises to the microtubule organizing center. It is found in the centrosome. The protein localises to the recycling endosome membrane. The protein resides in the cleavage furrow. Its subcellular location is the midbody. It localises to the cytoplasmic vesicle. In terms of biological role, acts as a regulator of endocytic traffic by participating in membrane delivery. Required for the abscission step in cytokinesis, possibly by acting as an 'address tag' delivering recycling endosome membranes to the cleavage furrow during late cytokinesis. In case of infection by HCMV (human cytomegalovirus), may participate in egress of the virus out of nucleus; this function is independent of ARF6. This Homo sapiens (Human) protein is Rab11 family-interacting protein 4 (RAB11FIP4).